The primary structure comprises 438 residues: Trigger factor (438 aa).

In terms of domain architecture, PPIase FKBP-type spans 160–245 (DDKVTIDFVG…VKKIQQAELP (86 aa)).

This sequence belongs to the FKBP-type PPIase family. Tig subfamily.

It localises to the cytoplasm. The catalysed reaction is [protein]-peptidylproline (omega=180) = [protein]-peptidylproline (omega=0). In terms of biological role, involved in protein export. Acts as a chaperone by maintaining the newly synthesized protein in an open conformation. Functions as a peptidyl-prolyl cis-trans isomerase. In Francisella tularensis subsp. holarctica (strain LVS), this protein is Trigger factor.